Reading from the N-terminus, the 535-residue chain is Bifunctional purine biosynthesis protein PurH (535 aa).

Residues 6 to 151 (TRLPIRRALI…KNHKDVAIVV (146 aa)) enclose the MGS-like domain.

Belongs to the PurH family.

It carries out the reaction (6R)-10-formyltetrahydrofolate + 5-amino-1-(5-phospho-beta-D-ribosyl)imidazole-4-carboxamide = 5-formamido-1-(5-phospho-D-ribosyl)imidazole-4-carboxamide + (6S)-5,6,7,8-tetrahydrofolate. The catalysed reaction is IMP + H2O = 5-formamido-1-(5-phospho-D-ribosyl)imidazole-4-carboxamide. Its pathway is purine metabolism; IMP biosynthesis via de novo pathway; 5-formamido-1-(5-phospho-D-ribosyl)imidazole-4-carboxamide from 5-amino-1-(5-phospho-D-ribosyl)imidazole-4-carboxamide (10-formyl THF route): step 1/1. The protein operates within purine metabolism; IMP biosynthesis via de novo pathway; IMP from 5-formamido-1-(5-phospho-D-ribosyl)imidazole-4-carboxamide: step 1/1. This Pseudomonas entomophila (strain L48) protein is Bifunctional purine biosynthesis protein PurH.